A 233-amino-acid polypeptide reads, in one-letter code: Archaetidylserine synthase (233 aa).

The next 8 membrane-spanning stretches (helical) occupy residues 7-27 (ITSF…SGYL), 29-49 (ILLS…LAVL), 75-95 (SLSD…SAAV), 102-122 (ILVG…FNVL), 126-146 (GKNF…SFYL), 147-167 (TGFY…VLMI), 180-200 (ASTA…VEIL), and 206-226 (VAGP…AVPI).

This sequence belongs to the CDP-alcohol phosphatidyltransferase class-I family.

The protein localises to the membrane. The enzyme catalyses CDP-2,3-bis-O-(geranylgeranyl)-sn-glycerol + L-serine = archaetidylserine + CMP + H(+). It catalyses the reaction CDP-2,3-bis-O-(phytanyl)-sn-glycerol + L-serine = 2,3-bis-O-phytanyl-sn-glycero-3-phospho-L-serine + CMP + H(+). It participates in membrane lipid metabolism; glycerophospholipid metabolism. With respect to regulation, activated by Mn(2+) ions. Functionally, involved in the lipid biosynthesis. Catalyzes the formation of unsaturated archaetidylserine from CDP-unsaturated archaeol and L-serine. Activity with ester-linked substrate analogs containing straight aliphatic chains (typical bacterial substrates) is two to three times higher than that with the corresponding ether-type substrate (typical archaeal substrates). Both enantiomers of CDP-unsaturated archaeols with ether-linked geranylgeranyl chains and CDP-saturated archaeol with ether-linked phytanyl chains are similarly active. The enzyme also accepts D-serine, although activity is only about third of that with L-serine. The polypeptide is Archaetidylserine synthase (Methanothermobacter thermautotrophicus (strain ATCC 29096 / DSM 1053 / JCM 10044 / NBRC 100330 / Delta H) (Methanobacterium thermoautotrophicum)).